We begin with the raw amino-acid sequence, 170 residues long: Large ribosomal subunit protein uL16 (170 aa).

Belongs to the universal ribosomal protein uL16 family.

The protein is Large ribosomal subunit protein uL16 of Methanoculleus marisnigri (strain ATCC 35101 / DSM 1498 / JR1).